A 317-amino-acid chain; its full sequence is Transcription cofactor vestigial-like protein 2 (317 aa).

4 disordered regions span residues 41–76 (CNASPSSSGSGSSSFSSQTPASIKEEEGSPEKERPP), 108–128 (SQPSSYSPSCTSSKAPRSSGP), 191–214 (TEPWHHAHPHHAHPHHPYALGGAL), and 253–293 (RLAT…PSGD). The segment covering 44 to 57 (SPSSSGSGSSSFSS) has biased composition (low complexity). Positions 63–76 (IKEEEGSPEKERPP) are enriched in basic and acidic residues. The segment covering 108–120 (SQPSSYSPSCTSS) has biased composition (low complexity). The span at 196-206 (HAHPHHAHPHH) shows a compositional bias: basic residues. A compositionally biased stretch (low complexity) spans 272–292 (KGEPAGAAWAGPGGPFASPSG).

Belongs to the vestigial family. In terms of assembly, interacts with TEFs. Binds to TEAD1/TEF1. As to expression, skeletal muscle.

The protein resides in the nucleus. In terms of biological role, may act as a specific coactivator for the mammalian TEFs. May play a role in the development of skeletal muscles. The polypeptide is Transcription cofactor vestigial-like protein 2 (VGLL2) (Homo sapiens (Human)).